Here is a 219-residue protein sequence, read N- to C-terminus: Large ribosomal subunit protein bL25 (219 aa).

A disordered region spans residues 194–219 (SSTELEETPEVPASAVPTTDQGESAE). Polar residues predominate over residues 209-219 (VPTTDQGESAE).

The protein belongs to the bacterial ribosomal protein bL25 family. CTC subfamily. In terms of assembly, part of the 50S ribosomal subunit; part of the 5S rRNA/L5/L18/L25 subcomplex. Contacts the 5S rRNA. Binds to the 5S rRNA independently of L5 and L18.

Its function is as follows. This is one of the proteins that binds to the 5S RNA in the ribosome where it forms part of the central protuberance. This chain is Large ribosomal subunit protein bL25, found in Legionella pneumophila (strain Paris).